A 219-amino-acid chain; its full sequence is Deoxyribose-phosphate aldolase (219 aa).

The active-site Proton donor/acceptor is the Asp-88. Lys-150 serves as the catalytic Schiff-base intermediate with acetaldehyde. The active-site Proton donor/acceptor is the Lys-179.

This sequence belongs to the DeoC/FbaB aldolase family. DeoC type 1 subfamily.

It is found in the cytoplasm. It carries out the reaction 2-deoxy-D-ribose 5-phosphate = D-glyceraldehyde 3-phosphate + acetaldehyde. It functions in the pathway carbohydrate degradation; 2-deoxy-D-ribose 1-phosphate degradation; D-glyceraldehyde 3-phosphate and acetaldehyde from 2-deoxy-alpha-D-ribose 1-phosphate: step 2/2. Its function is as follows. Catalyzes a reversible aldol reaction between acetaldehyde and D-glyceraldehyde 3-phosphate to generate 2-deoxy-D-ribose 5-phosphate. This chain is Deoxyribose-phosphate aldolase, found in Aquifex aeolicus (strain VF5).